We begin with the raw amino-acid sequence, 348 residues long: Phosphoribosylformylglycinamidine cyclo-ligase (348 aa).

Belongs to the AIR synthase family.

The protein localises to the cytoplasm. It catalyses the reaction 2-formamido-N(1)-(5-O-phospho-beta-D-ribosyl)acetamidine + ATP = 5-amino-1-(5-phospho-beta-D-ribosyl)imidazole + ADP + phosphate + H(+). It functions in the pathway purine metabolism; IMP biosynthesis via de novo pathway; 5-amino-1-(5-phospho-D-ribosyl)imidazole from N(2)-formyl-N(1)-(5-phospho-D-ribosyl)glycinamide: step 2/2. The chain is Phosphoribosylformylglycinamidine cyclo-ligase from Geotalea uraniireducens (strain Rf4) (Geobacter uraniireducens).